The chain runs to 215 residues: Protein slowmo (215 aa).

In terms of domain architecture, PRELI/MSF1 spans 1–170 (MKIWTSEHIF…VIGLINTEVK (170 aa)).

This sequence belongs to the slowmo family. As to expression, expressed in specific tissues such as the developing central nervous system (CNS) and both the male and female germline. In the CNS, it is restricted in a subset of cells during embryogenesis and early larval development. In embryos, it is also expressed in salivary glands. In the testis, expressed in somatic cyst cells throughout the distal region where the mitotic cysts develop, extending through to meiotic cysts.

It localises to the mitochondrion. Its function is as follows. Required to regulate peristaltic movement and also for germline proliferation in males and females. This is Protein slowmo (slmo) from Drosophila melanogaster (Fruit fly).